A 176-amino-acid chain; its full sequence is Large ribosomal subunit protein uL6 (176 aa).

The protein belongs to the universal ribosomal protein uL6 family. In terms of assembly, part of the 50S ribosomal subunit.

Its function is as follows. This protein binds to the 23S rRNA, and is important in its secondary structure. It is located near the subunit interface in the base of the L7/L12 stalk, and near the tRNA binding site of the peptidyltransferase center. The chain is Large ribosomal subunit protein uL6 from Burkholderia ambifaria (strain ATCC BAA-244 / DSM 16087 / CCUG 44356 / LMG 19182 / AMMD) (Burkholderia cepacia (strain AMMD)).